A 315-amino-acid chain; its full sequence is DNA-directed RNA polymerase subunit alpha (315 aa).

The interval 1–228 (MLEIEKPKIE…EHFKLFMTLT (228 aa)) is alpha N-terminal domain (alpha-NTD). The alpha C-terminal domain (alpha-CTD) stretch occupies residues 245 to 315 (KEKVLEMAIE…LGLSLKQNED (71 aa)).

The protein belongs to the RNA polymerase alpha chain family. As to quaternary structure, homodimer. The RNAP catalytic core consists of 2 alpha, 1 beta, 1 beta' and 1 omega subunit. When a sigma factor is associated with the core the holoenzyme is formed, which can initiate transcription.

The enzyme catalyses RNA(n) + a ribonucleoside 5'-triphosphate = RNA(n+1) + diphosphate. DNA-dependent RNA polymerase catalyzes the transcription of DNA into RNA using the four ribonucleoside triphosphates as substrates. The chain is DNA-directed RNA polymerase subunit alpha from Clostridium kluyveri (strain NBRC 12016).